Here is a 219-residue protein sequence, read N- to C-terminus: FMN-dependent NADH:quinone oxidoreductase 2 (219 aa).

FMN is bound by residues Ser-10 and 23-25 (SIS).

It belongs to the azoreductase type 1 family. As to quaternary structure, homodimer. FMN is required as a cofactor.

The enzyme catalyses 2 a quinone + NADH + H(+) = 2 a 1,4-benzosemiquinone + NAD(+). The catalysed reaction is N,N-dimethyl-1,4-phenylenediamine + anthranilate + 2 NAD(+) = 2-(4-dimethylaminophenyl)diazenylbenzoate + 2 NADH + 2 H(+). Quinone reductase that provides resistance to thiol-specific stress caused by electrophilic quinones. In terms of biological role, also exhibits azoreductase activity. Catalyzes the reductive cleavage of the azo bond in aromatic azo compounds to the corresponding amines. The chain is FMN-dependent NADH:quinone oxidoreductase 2 from Colwellia psychrerythraea (strain 34H / ATCC BAA-681) (Vibrio psychroerythus).